We begin with the raw amino-acid sequence, 790 residues long: AMP deaminase (790 aa).

A compositionally biased stretch (polar residues) spans 1 to 14 (MSTPLRGSSPQVSF). A disordered region spans residues 1–26 (MSTPLRGSSPQVSFYESELDQEGGSD). Zn(2+) contacts are provided by His221 and His223. Residues His223 and 292-297 (KFNLKY) each bind substrate. His488 lines the Zn(2+) pocket. Glu491 contacts substrate. The Proton acceptor role is filled by His510. Asp565 contributes to the Zn(2+) binding site. 566 to 569 (DPLQ) contributes to the substrate binding site. Disordered stretches follow at residues 698–726 (NKLRNSSVGSTPNNGTPSSSGTPSLSSPG) and 739–790 (PPPL…KSDK). Composition is skewed to low complexity over residues 706 to 726 (GSTPNNGTPSSSGTPSLSSPG) and 750 to 781 (NNNNNNNNNNNNNNNNNNNTNTNTNSNSTTTN).

It belongs to the metallo-dependent hydrolases superfamily. Adenosine and AMP deaminases family. As to quaternary structure, homodimer. Zn(2+) serves as cofactor.

The protein resides in the cytoplasm. The enzyme catalyses AMP + H2O + H(+) = IMP + NH4(+). It participates in purine metabolism; IMP biosynthesis via salvage pathway; IMP from AMP: step 1/1. Its activity is regulated as follows. Activated by ATP, inhibited by GTP, EDTA and inorganic phosphate. Its function is as follows. Catalyzes the conversion of adenosine monophosphate (AMP) to inosine monophosphate (IMP) and ammonia (NH4(+)). Participates in the regulation of the adenylated nucleotide pool and the interconversion to guanylated nucleotides during early morphodifferentiation. This Dictyostelium discoideum (Social amoeba) protein is AMP deaminase (amdA).